Here is a 298-residue protein sequence, read N- to C-terminus: NAD kinase (298 aa).

D80 functions as the Proton acceptor in the catalytic mechanism. NAD(+)-binding positions include 80 to 81 (DG), 154 to 155 (ND), R182, D184, 195 to 200 (TAYALS), A219, and Q253.

The protein belongs to the NAD kinase family. It depends on a divalent metal cation as a cofactor.

The protein localises to the cytoplasm. The enzyme catalyses NAD(+) + ATP = ADP + NADP(+) + H(+). Involved in the regulation of the intracellular balance of NAD and NADP, and is a key enzyme in the biosynthesis of NADP. Catalyzes specifically the phosphorylation on 2'-hydroxyl of the adenosine moiety of NAD to yield NADP. This chain is NAD kinase, found in Paracidovorax citrulli (strain AAC00-1) (Acidovorax citrulli).